A 224-amino-acid polypeptide reads, in one-letter code: UPF0111 protein CT_691 (224 aa).

It belongs to the UPF0111 family.

The polypeptide is UPF0111 protein CT_691 (Chlamydia trachomatis serovar D (strain ATCC VR-885 / DSM 19411 / UW-3/Cx)).